Reading from the N-terminus, the 283-residue chain is 4-diphosphocytidyl-2-C-methyl-D-erythritol kinase (283 aa).

The active site involves Lys10. 99-109 (PMGGGLGGGSS) is an ATP binding site. The active site involves Asp141.

The protein belongs to the GHMP kinase family. IspE subfamily. As to quaternary structure, homodimer.

It carries out the reaction 4-CDP-2-C-methyl-D-erythritol + ATP = 4-CDP-2-C-methyl-D-erythritol 2-phosphate + ADP + H(+). The protein operates within isoprenoid biosynthesis; isopentenyl diphosphate biosynthesis via DXP pathway; isopentenyl diphosphate from 1-deoxy-D-xylulose 5-phosphate: step 3/6. Catalyzes the phosphorylation of the position 2 hydroxy group of 4-diphosphocytidyl-2C-methyl-D-erythritol. The sequence is that of 4-diphosphocytidyl-2-C-methyl-D-erythritol kinase from Salmonella choleraesuis (strain SC-B67).